Consider the following 639-residue polypeptide: Protein argonaute (639 aa).

The N-terminal domain stretch occupies residues 1–100 (MYLNLYKIDI…YIKKLFLDND (100 aa)). The interval 101-153 (FYFKKGNNFISNSEVFSLDSNENVNAHLTYKIKIHNISNEYYLSILPKFTFLS) is linker L1. The tract at residues 154 to 209 (KEPALESAIKSGYLYNIKSGKSFPYISGLDGILKIDIGNNQIVEVAYPENYLFNFT) is PAZ domain. The interval 210-292 (TRDAEKYGFS…KYSFYKNEQP (83 aa)) is linker L2. The segment at 293–424 (LKAIFFFSSK…YVYKMGNFIP (132 aa)) is mid domain. The segment at 425–639 (ECKPFILKKM…DYEWKLYIPY (215 aa)) is PIWI domain. Residues aspartate 446, glutamate 482, aspartate 516, and asparagine 624 contribute to the active site. Residue aspartate 446 coordinates Mn(2+). 2 residues coordinate Mn(2+): aspartate 516 and asparagine 624.

This sequence belongs to the argonaute family. Long pAgo subfamily. Mn(2+) is required as a cofactor.

Its subcellular location is the cytoplasm. An RNA-guided ssDNA endonuclease that may play a role in defense against invading mobile genetic elements. Uses short 5'-OH-ssRNA sequences as guides (gRNA) to bind complementary target DNA (tDNA) or target RNA resulting in target cleavage. The cleavage site is 10 nucleotides (nt) downstream of the target residue base-paired with the 5'-end of the gRNA. Reaction rates are fastest on 5'-OH-gRNA:tDNA followed by 5'-OH-gRNA:target RNA. gRNA between 17-21 nt supports equivalent rates of cleavage, has no preferred 5'-nt. Has weak activity on tDNA with 5'-phospho-gRNA, yielding products 1-2 nt longer. Unlike other characterized prokaryotic Ago proteins symmetric mismatches centered around the cleavage site reduce cleavage efficiency. This is Protein argonaute from Marinitoga piezophila (strain DSM 14283 / JCM 11233 / KA3).